The chain runs to 439 residues: O-fucosyltransferase 13 (439 aa).

Residues 8–28 traverse the membrane as a helical; Signal-anchor for type II membrane protein segment; that stretch reads PLFVFVLTFSLLLVVILLSPS. N-linked (GlcNAc...) asparagine glycans are attached at residues Asn104 and Asn119. A substrate-binding site is contributed by 238 to 240; sequence HLR. A glycan (N-linked (GlcNAc...) asparagine) is linked at Asn293.

It belongs to the glycosyltransferase GT106 family.

Its subcellular location is the membrane. Its pathway is glycan metabolism. In Arabidopsis thaliana (Mouse-ear cress), this protein is O-fucosyltransferase 13.